Here is a 193-residue protein sequence, read N- to C-terminus: Probable DNA-directed RNA polymerase subunit delta (193 aa).

One can recognise an HTH HARE-type domain in the interval 14-83 (LSMIEVARAI…GENKWGLRSW (70 aa)). Acidic residues-rich tracts occupy residues 117–134 (GDDD…DEDN) and 142–193 (EYDD…VVDE). Residues 117–193 (GDDDAIDYGH…EYSDEEVVDE (77 aa)) are disordered.

The protein belongs to the RpoE family. RNAP is composed of a core of 2 alpha, a beta and a beta' subunits. The core is associated with a delta subunit and one of several sigma factors.

Its function is as follows. Participates in both the initiation and recycling phases of transcription. In the presence of the delta subunit, RNAP displays an increased specificity of transcription, a decreased affinity for nucleic acids, and an increased efficiency of RNA synthesis because of enhanced recycling. The polypeptide is Probable DNA-directed RNA polymerase subunit delta (Streptococcus suis (strain 05ZYH33)).